Reading from the N-terminus, the 20-residue chain is Thylakoid lumenal 22 kDa protein (20 aa).

Its subcellular location is the plastid. It localises to the chloroplast thylakoid lumen. This chain is Thylakoid lumenal 22 kDa protein, found in Spinacia oleracea (Spinach).